A 935-amino-acid polypeptide reads, in one-letter code: Isoleucine--tRNA ligase (935 aa).

The 'HIGH' region motif lies at 58 to 68 (PYANGSIHVGH). E558 contributes to the L-isoleucyl-5'-AMP binding site. The short motif at 599–603 (KMSKS) is the 'KMSKS' region element. K602 is an ATP binding site. C897, C900, C917, and C920 together coordinate Zn(2+).

The protein belongs to the class-I aminoacyl-tRNA synthetase family. IleS type 1 subfamily. In terms of assembly, monomer. Zn(2+) serves as cofactor.

It localises to the cytoplasm. It carries out the reaction tRNA(Ile) + L-isoleucine + ATP = L-isoleucyl-tRNA(Ile) + AMP + diphosphate. Its function is as follows. Catalyzes the attachment of isoleucine to tRNA(Ile). As IleRS can inadvertently accommodate and process structurally similar amino acids such as valine, to avoid such errors it has two additional distinct tRNA(Ile)-dependent editing activities. One activity is designated as 'pretransfer' editing and involves the hydrolysis of activated Val-AMP. The other activity is designated 'posttransfer' editing and involves deacylation of mischarged Val-tRNA(Ile). The sequence is that of Isoleucine--tRNA ligase from Francisella tularensis subsp. mediasiatica (strain FSC147).